We begin with the raw amino-acid sequence, 414 residues long: Multifunctional CCA protein (414 aa).

G8 and R11 together coordinate ATP. Residues G8 and R11 each contribute to the CTP site. Residues D21 and D23 each contribute to the Mg(2+) site. R91, R137, and R140 together coordinate ATP. Residues R91, R137, and R140 each coordinate CTP. One can recognise an HD domain in the interval 228–329 (TGIHTLMVLE…VKLFDKGDFW (102 aa)).

It belongs to the tRNA nucleotidyltransferase/poly(A) polymerase family. Bacterial CCA-adding enzyme type 1 subfamily. As to quaternary structure, monomer. Can also form homodimers and oligomers. It depends on Mg(2+) as a cofactor. Ni(2+) serves as cofactor.

It catalyses the reaction a tRNA precursor + 2 CTP + ATP = a tRNA with a 3' CCA end + 3 diphosphate. It carries out the reaction a tRNA with a 3' CCA end + 2 CTP + ATP = a tRNA with a 3' CCACCA end + 3 diphosphate. Catalyzes the addition and repair of the essential 3'-terminal CCA sequence in tRNAs without using a nucleic acid template. Adds these three nucleotides in the order of C, C, and A to the tRNA nucleotide-73, using CTP and ATP as substrates and producing inorganic pyrophosphate. tRNA 3'-terminal CCA addition is required both for tRNA processing and repair. Also involved in tRNA surveillance by mediating tandem CCA addition to generate a CCACCA at the 3' terminus of unstable tRNAs. While stable tRNAs receive only 3'-terminal CCA, unstable tRNAs are marked with CCACCA and rapidly degraded. In Shewanella frigidimarina (strain NCIMB 400), this protein is Multifunctional CCA protein.